The primary structure comprises 315 residues: Kiwa protein KwaB (315 aa).

In terms of biological role, component of antiviral defense system Kiwa, composed of KwaA and KwaB. Expression of Kiwa in E.coli (strain MG1655) confers resistance to phages lambda and SECphi18. This Escherichia coli O55:H7 (strain RM12579 / EPEC) protein is Kiwa protein KwaB.